The primary structure comprises 72 residues: Translation initiation factor IF-1 (72 aa).

The region spanning 1-72 is the S1-like domain; it reads MSKEDMIEFS…TKGRITFRFK (72 aa).

It belongs to the IF-1 family. In terms of assembly, component of the 30S ribosomal translation pre-initiation complex which assembles on the 30S ribosome in the order IF-2 and IF-3, IF-1 and N-formylmethionyl-tRNA(fMet); mRNA recruitment can occur at any time during PIC assembly.

It localises to the cytoplasm. In terms of biological role, one of the essential components for the initiation of protein synthesis. Stabilizes the binding of IF-2 and IF-3 on the 30S subunit to which N-formylmethionyl-tRNA(fMet) subsequently binds. Helps modulate mRNA selection, yielding the 30S pre-initiation complex (PIC). Upon addition of the 50S ribosomal subunit IF-1, IF-2 and IF-3 are released leaving the mature 70S translation initiation complex. This chain is Translation initiation factor IF-1, found in Granulibacter bethesdensis (strain ATCC BAA-1260 / CGDNIH1).